A 273-amino-acid chain; its full sequence is Glutamate racemase (273 aa).

Residues 11–12 (DS) and 43–44 (YG) contribute to the substrate site. The Proton donor/acceptor role is filled by cysteine 74. Position 75-76 (75-76 (NT)) interacts with substrate. The active-site Proton donor/acceptor is the cysteine 185. 186–187 (TH) is a substrate binding site.

This sequence belongs to the aspartate/glutamate racemases family.

The enzyme catalyses L-glutamate = D-glutamate. Its pathway is cell wall biogenesis; peptidoglycan biosynthesis. Its function is as follows. Provides the (R)-glutamate required for cell wall biosynthesis. The sequence is that of Glutamate racemase from Lactiplantibacillus plantarum (strain ATCC BAA-793 / NCIMB 8826 / WCFS1) (Lactobacillus plantarum).